Reading from the N-terminus, the 361-residue chain is Transposase A from transposon Tn554 (361 aa).

Residues 23–120 (YQLIEPVMKF…VVMSFLDYLS (98 aa)) form the Core-binding (CB) domain. The 189-residue stretch at 163–351 (KQIRTLRSKE…SDQDMKNEFN (189 aa)) folds into the Tyr recombinase domain. Catalysis depends on residues arginine 198, lysine 232, histidine 302, arginine 305, and histidine 328. The O-(3'-phospho-DNA)-tyrosine intermediate role is filled by tyrosine 338.

It belongs to the 'phage' integrase family.

Its function is as follows. One of three proteins encoded by transposon Tn554 required for its transposition. This chain is Transposase A from transposon Tn554 (tnpA1), found in Staphylococcus aureus (strain Mu50 / ATCC 700699).